The following is a 220-amino-acid chain: Ribosomal RNA large subunit methyltransferase E (220 aa).

5 residues coordinate S-adenosyl-L-methionine: Gly64, Trp66, Asp84, Asp100, and Asp125. Lys165 (proton acceptor) is an active-site residue.

It belongs to the class I-like SAM-binding methyltransferase superfamily. RNA methyltransferase RlmE family.

Its subcellular location is the cytoplasm. It catalyses the reaction uridine(2552) in 23S rRNA + S-adenosyl-L-methionine = 2'-O-methyluridine(2552) in 23S rRNA + S-adenosyl-L-homocysteine + H(+). Specifically methylates the uridine in position 2552 of 23S rRNA at the 2'-O position of the ribose in the fully assembled 50S ribosomal subunit. In Thiobacillus denitrificans (strain ATCC 25259 / T1), this protein is Ribosomal RNA large subunit methyltransferase E.